Here is a 65-residue protein sequence, read N- to C-terminus: Large ribosomal subunit protein bL35 (65 aa).

The disordered stretch occupies residues 1–26 (MPKIKTVRGAAKRFKKTASGGFKRKQ). Over residues 10 to 26 (AAKRFKKTASGGFKRKQ) the composition is skewed to basic residues.

This sequence belongs to the bacterial ribosomal protein bL35 family.

The polypeptide is Large ribosomal subunit protein bL35 (Actinobacillus pleuropneumoniae serotype 7 (strain AP76)).